A 258-amino-acid chain; its full sequence is Pimeloyl-[acyl-carrier protein] methyl ester esterase (258 aa).

Positions 16 to 242 (LVLLHGWGLN…AAHAPFISHP (227 aa)) constitute an AB hydrolase-1 domain. Residues W22, 82-83 (SM), and 143-147 (FLALQ) contribute to the substrate site. The Nucleophile role is filled by S82. Residues D207 and H235 contribute to the active site. Position 235 (H235) interacts with substrate.

It belongs to the AB hydrolase superfamily. Carboxylesterase BioH family. As to quaternary structure, monomer.

It is found in the cytoplasm. It carries out the reaction 6-carboxyhexanoyl-[ACP] methyl ester + H2O = 6-carboxyhexanoyl-[ACP] + methanol + H(+). It functions in the pathway cofactor biosynthesis; biotin biosynthesis. Functionally, the physiological role of BioH is to remove the methyl group introduced by BioC when the pimeloyl moiety is complete. It allows to synthesize pimeloyl-ACP via the fatty acid synthetic pathway through the hydrolysis of the ester bonds of pimeloyl-ACP esters. The polypeptide is Pimeloyl-[acyl-carrier protein] methyl ester esterase (Yersinia pseudotuberculosis serotype O:1b (strain IP 31758)).